We begin with the raw amino-acid sequence, 275 residues long: Large ribosomal subunit protein uL2c (275 aa).

2 disordered regions span residues 1–28 (MGIR…TKSK) and 227–251 (PCDH…TPWG). Polar residues predominate over residues 10–22 (TPGTRNRSSSDFS).

Belongs to the universal ribosomal protein uL2 family. Part of the 50S ribosomal subunit.

The protein localises to the plastid. The protein resides in the chloroplast. The polypeptide is Large ribosomal subunit protein uL2c (rpl2) (Rhodomonas salina (Cryptomonas salina)).